A 179-amino-acid polypeptide reads, in one-letter code: Avenin-like a2 (179 aa).

The first 19 residues, 1-19, serve as a signal peptide directing secretion; the sequence is MKTMFLLALLAFTATSAVA.

Belongs to the prolamin family. Post-translationally, contains 7 disulfide bonds.

In terms of biological role, seed storage protein. Not integrated in the gluten polymer through disulfide bonds, unless incorporated by reduction and reoxidation during dough making. Increases dough strength and bread volume, but decreases dough stability when added into a base wheat flour. This is Avenin-like a2 from Triticum aestivum (Wheat).